The primary structure comprises 118 residues: Small ribosomal subunit protein uS13 (118 aa).

Residues 94 to 118 (SLPVRGQRSKTNARTRKGPRKAIKK) are disordered.

This sequence belongs to the universal ribosomal protein uS13 family. As to quaternary structure, part of the 30S ribosomal subunit. Forms a loose heterodimer with protein S19. Forms two bridges to the 50S subunit in the 70S ribosome.

Its function is as follows. Located at the top of the head of the 30S subunit, it contacts several helices of the 16S rRNA. In the 70S ribosome it contacts the 23S rRNA (bridge B1a) and protein L5 of the 50S subunit (bridge B1b), connecting the 2 subunits; these bridges are implicated in subunit movement. Contacts the tRNAs in the A and P-sites. The protein is Small ribosomal subunit protein uS13 of Psychromonas ingrahamii (strain DSM 17664 / CCUG 51855 / 37).